The chain runs to 185 residues: MISSFRAQCAARVVREGGVIAYPTEAVWGLGCDPWNEDAVYRLLALKARPVEKGLIVVAAHIHQLDFLLEDLPDVWLERLAGTWPGPNTWLVPHQDRLPEWVTGVHDSVAVRVTDHPLVQELCYLTGPLISTSANPAGRPAARTRLRVEQYFHDELDGVLGGALGGRRNPSLIRDLVTGQVIRPA.

The YrdC-like domain occupies 4–185; it reads SFRAQCAARV…LVTGQVIRPA (182 aa).

It belongs to the SUA5 family. TsaC subfamily.

The protein localises to the cytoplasm. The catalysed reaction is L-threonine + hydrogencarbonate + ATP = L-threonylcarbamoyladenylate + diphosphate + H2O. Required for the formation of a threonylcarbamoyl group on adenosine at position 37 (t(6)A37) in tRNAs that read codons beginning with adenine. Catalyzes the conversion of L-threonine, HCO(3)(-)/CO(2) and ATP to give threonylcarbamoyl-AMP (TC-AMP) as the acyladenylate intermediate, with the release of diphosphate. This is Threonylcarbamoyl-AMP synthase from Pseudomonas paraeruginosa (strain DSM 24068 / PA7) (Pseudomonas aeruginosa (strain PA7)).